A 1198-amino-acid chain; its full sequence is Potassium/sodium hyperpolarization-activated cyclic nucleotide-gated channel 4 (1198 aa).

The Cytoplasmic segment spans residues Met-1–Asp-266. The interval Ile-25 to Ser-183 is disordered. Positions Met-26 to Gly-36 are enriched in acidic residues. Gly residues predominate over residues Ser-105–Ser-118. The span at His-121–Ile-132 shows a compositional bias: basic and acidic residues. Ser-139 is subject to Phosphoserine. Over residues Ala-164–Pro-174 the composition is skewed to pro residues. The involved in subunit assembly stretch occupies residues Gly-209–Asp-260. The chain crosses the membrane as a helical span at residues Leu-267–Phe-287. Topologically, residues Lys-288–Thr-293 are extracellular. Residues Pro-294–Phe-314 form a helical membrane-spanning segment. Residues Arg-315–Ser-340 lie on the Cytoplasmic side of the membrane. A helical transmembrane segment spans residues Trp-341–Thr-361. The Extracellular segment spans residues Arg-362 to Tyr-368. A helical; Voltage-sensor transmembrane segment spans residues Lys-369–Leu-389. The Cytoplasmic segment spans residues Arg-390–Asn-420. The chain crosses the membrane as a helical span at residues Leu-421–Met-441. Residues Leu-442 to Gln-464 lie on the Extracellular side of the membrane. The N-linked (GlcNAc...) asparagine glycan is linked to Asn-458. The segment at residues Tyr-465–Pro-486 is an intramembrane region (pore-forming). The Extracellular portion of the chain corresponds to Val-487–Met-496. A helical transmembrane segment spans residues Leu-497–Ile-517. Over Gln-518–Leu-1198 the chain is Cytoplasmic. The 3',5'-cyclic GMP site is built by Tyr-559, Lys-562, Phe-564, and Glu-566. Positions 659, 660, 662, 669, 670, 673, and 710 each coordinate 3',5'-cyclic AMP. Residues Ala-804–Leu-1198 are disordered. Low complexity-rich tracts occupy residues Ser-831–Ser-856 and Ser-866–Ser-880. Over residues Ser-881–Thr-894 the composition is skewed to pro residues. Composition is skewed to low complexity over residues Pro-895 to Gly-905, Leu-913 to Ala-937, and Arg-965 to Leu-985. The span at Gly-1027–Pro-1040 shows a compositional bias: pro residues. A compositionally biased stretch (low complexity) spans Ala-1043–Pro-1054. A phosphoserine mark is found at Ser-1103 and Ser-1106. Over residues Ala-1120 to Pro-1132 the composition is skewed to gly residues.

The protein belongs to the potassium channel HCN family. Homotetramer. The potassium channel is composed of a homo- or heterotetrameric complex of pore-forming subunits. Interacts with PEX5L with a 4:4 HCN4:PEX5L stoichiometry; reduces the effects of cAMP on the voltage-dependence and rate of activation. Interacts with IRAG1; regulates HCN4 channel activity. Interacts with IRAG2; regulates HCN4 channel activity. Post-translationally, S-palmitoylated. In terms of tissue distribution, highly expressed in pyramidal and granule layer of the hippocampus, in thalamus anterior nucleus, in the supraoptic nucleus in hypothalamus, in cerebellum, and in trapezoid nuclei and superior olivary complex in the auditory system. Detected in a subset of elongated cells in taste buds.

It localises to the cell membrane. The enzyme catalyses K(+)(in) = K(+)(out). It catalyses the reaction Na(+)(in) = Na(+)(out). Activated by cAMP and at 100 times higher concentrationsand to a lesser extent by cGMP and cCMP. cAMP binding causes a conformation change that leads to the assembly of an active tetramer and channel opening. Binding of cAMP removes a tonic inhibition conferred by cyclic nucleotide-binding domain (CNBD) on channel opening. Cyclic dinucleotides can modulate HCN4 channel; cyclic dinucleotides acting as potent antagonists of cAMP. Inhibited by extracellular Cs(+) ions. Auxiliary subunits can also regulate HCN4 channel. IRAG1 causes a gain-of-function by shifting HCN4 activation to more depolarized membrane potentials in the absence of cAMP. In contrast, IRAG2 causes a loss-of-function by inhibiting cAMP-dependent potentiation of HCN4 activation. Its function is as follows. Hyperpolarization-activated ion channel that are permeable to Na(+) and K(+) ions with very slow activation and inactivation. Exhibits higher selectivity for K(+) over Na(+) ions. Contributes to the native pacemaker currents in heart (If) that regulate the rhythm of heart beat. Contributes to the native pacemaker currents in neurons (Ih). May mediate responses to sour stimuli. This Rattus norvegicus (Rat) protein is Potassium/sodium hyperpolarization-activated cyclic nucleotide-gated channel 4 (Hcn4).